A 78-amino-acid polypeptide reads, in one-letter code: Large ribosomal subunit protein bL28 (78 aa).

This sequence belongs to the bacterial ribosomal protein bL28 family.

The sequence is that of Large ribosomal subunit protein bL28 from Pectobacterium atrosepticum (strain SCRI 1043 / ATCC BAA-672) (Erwinia carotovora subsp. atroseptica).